A 128-amino-acid polypeptide reads, in one-letter code: Small ribosomal subunit protein uS9 (128 aa).

This sequence belongs to the universal ribosomal protein uS9 family.

The polypeptide is Small ribosomal subunit protein uS9 (Flavobacterium psychrophilum (strain ATCC 49511 / DSM 21280 / CIP 103535 / JIP02/86)).